Here is a 475-residue protein sequence, read N- to C-terminus: Ribulose bisphosphate carboxylase large chain (475 aa).

A propeptide spanning residues 1–2 (MS) is cleaved from the precursor. P3 is subject to N-acetylproline. K14 is modified (N6,N6,N6-trimethyllysine). Residues N123 and T173 each coordinate substrate. K175 (proton acceptor) is an active-site residue. Residue K177 coordinates substrate. 3 residues coordinate Mg(2+): K201, D203, and E204. K201 bears the N6-carboxylysine mark. The active-site Proton acceptor is H294. Residues R295, H327, and S379 each contribute to the substrate site.

Belongs to the RuBisCO large chain family. Type I subfamily. As to quaternary structure, heterohexadecamer of 8 large chains and 8 small chains; disulfide-linked. The disulfide link is formed within the large subunit homodimers. Requires Mg(2+) as cofactor. Post-translationally, the disulfide bond which can form in the large chain dimeric partners within the hexadecamer appears to be associated with oxidative stress and protein turnover.

Its subcellular location is the plastid. It localises to the chloroplast. The enzyme catalyses 2 (2R)-3-phosphoglycerate + 2 H(+) = D-ribulose 1,5-bisphosphate + CO2 + H2O. The catalysed reaction is D-ribulose 1,5-bisphosphate + O2 = 2-phosphoglycolate + (2R)-3-phosphoglycerate + 2 H(+). Functionally, ruBisCO catalyzes two reactions: the carboxylation of D-ribulose 1,5-bisphosphate, the primary event in carbon dioxide fixation, as well as the oxidative fragmentation of the pentose substrate in the photorespiration process. Both reactions occur simultaneously and in competition at the same active site. The protein is Ribulose bisphosphate carboxylase large chain of Nandina domestica (Heavenly bamboo).